A 223-amino-acid polypeptide reads, in one-letter code: Phosphoribosylformylglycinamidine synthase subunit PurQ (223 aa).

A Glutamine amidotransferase type-1 domain is found at 3–223; that stretch reads FAVLVFPGSN…MVKSWREQHV (221 aa). The active-site Nucleophile is Cys-85. Catalysis depends on residues His-193 and Glu-195.

Part of the FGAM synthase complex composed of 1 PurL, 1 PurQ and 2 PurS subunits.

The protein localises to the cytoplasm. The catalysed reaction is N(2)-formyl-N(1)-(5-phospho-beta-D-ribosyl)glycinamide + L-glutamine + ATP + H2O = 2-formamido-N(1)-(5-O-phospho-beta-D-ribosyl)acetamidine + L-glutamate + ADP + phosphate + H(+). The enzyme catalyses L-glutamine + H2O = L-glutamate + NH4(+). It participates in purine metabolism; IMP biosynthesis via de novo pathway; 5-amino-1-(5-phospho-D-ribosyl)imidazole from N(2)-formyl-N(1)-(5-phospho-D-ribosyl)glycinamide: step 1/2. Functionally, part of the phosphoribosylformylglycinamidine synthase complex involved in the purines biosynthetic pathway. Catalyzes the ATP-dependent conversion of formylglycinamide ribonucleotide (FGAR) and glutamine to yield formylglycinamidine ribonucleotide (FGAM) and glutamate. The FGAM synthase complex is composed of three subunits. PurQ produces an ammonia molecule by converting glutamine to glutamate. PurL transfers the ammonia molecule to FGAR to form FGAM in an ATP-dependent manner. PurS interacts with PurQ and PurL and is thought to assist in the transfer of the ammonia molecule from PurQ to PurL. The sequence is that of Phosphoribosylformylglycinamidine synthase subunit PurQ from Staphylococcus aureus (strain USA300).